A 186-amino-acid polypeptide reads, in one-letter code: Peptide deformylase (186 aa).

Fe cation-binding residues include cysteine 113 and histidine 156. Glutamate 157 is an active-site residue. Histidine 160 is a Fe cation binding site.

This sequence belongs to the polypeptide deformylase family. The cofactor is Fe(2+).

It catalyses the reaction N-terminal N-formyl-L-methionyl-[peptide] + H2O = N-terminal L-methionyl-[peptide] + formate. In terms of biological role, removes the formyl group from the N-terminal Met of newly synthesized proteins. Requires at least a dipeptide for an efficient rate of reaction. N-terminal L-methionine is a prerequisite for activity but the enzyme has broad specificity at other positions. This chain is Peptide deformylase, found in Ligilactobacillus salivarius (strain UCC118) (Lactobacillus salivarius).